The sequence spans 218 residues: Very-long-chain (3R)-3-hydroxyacyl-CoA dehydratase hpo-8 (218 aa).

The next 5 helical transmembrane spans lie at 15–35 (ILGWSAILVKTVLGLANGLTW), 44–64 (FELKIFQTAAILEVIHAIVGL), 86–106 (ILHLCSTARFSIGVPLLLVAW), 137–157 (LFYVLYPMGVSGELLTLFASL), and 176–196 (MGISFWWVLIIAALSYIPGFP). Residues Tyr142 and Glu149 contribute to the active site.

Belongs to the very long-chain fatty acids dehydratase HACD family.

Its subcellular location is the membrane. The enzyme catalyses a very-long-chain (3R)-3-hydroxyacyl-CoA = a very-long-chain (2E)-enoyl-CoA + H2O. Its pathway is lipid metabolism; fatty acid biosynthesis. Catalyzes the third of the four reactions of the long-chain fatty acids elongation cycle. This endoplasmic reticulum-bound enzymatic process, allows the addition of two carbons to the chain of long- and very long-chain fatty acids/VLCFAs per cycle. This enzyme catalyzes the dehydration of the 3-hydroxyacyl-CoA intermediate into trans-2,3-enoyl-CoA, within each cycle of fatty acid elongation. Thereby, it participates in the production of VLCFAs of different chain lengths that are involved in multiple biological processes as precursors of membrane lipids and lipid mediators. The polypeptide is Very-long-chain (3R)-3-hydroxyacyl-CoA dehydratase hpo-8 (hpo-8) (Caenorhabditis elegans).